The following is a 253-amino-acid chain: uncharacterized protein (253 aa).

Substrate is bound at residue S145. Y159 (proton acceptor) is an active-site residue.

It belongs to the short-chain dehydrogenases/reductases (SDR) family.

This is an uncharacterized protein from Mycobacterium tuberculosis (strain CDC 1551 / Oshkosh).